Consider the following 483-residue polypeptide: MGDDRPFVCNAPGCGQRFTNEDHLAVHKHKHEMTLKFGPARTDSVIIADQTPTPTRFLKNCEEVGLFNELASSFEHEFKKAADEDEKKAAAGPLDMSLPSTPDIKIKEEEPVEVDSSPPDSPASSPCSPPLKEKEVTPKPVLISTPTPTIVRPGSLPLHLGYDPLHPTLPSPTSVITQAPPSNRQMGSPTGSLPLVMHLANGQTMPVLPGPPVQMPSVISLARPVSMVPNIPGIPGPPVNSSGSISPSGHPIPSEAKMRLKATLTHQVSSINGGCGMVVGSASTMVTARPEQSQILIQHPDAPSPAQPQVSPAQPTPSTGGRRRRTVDEDPDERRQRFLERNRAAASRCRQKRKLWVSSLEKKAEELTSQNIQLSNEVTLLRNEVAQLKQLLLAHKDCPVTALQKKTQGYLESPKESSEPTGSPAPVIQHSSATAPSNGLSVRSAAEAVATSVLTQMASQRTELSMPIQSHVIMTPQSQSAGR.

The tract at residues 1 to 285 is transactivation domain; it reads MGDDRPFVCN…GMVVGSASTM (285 aa). A C2H2-type zinc finger spans residues 7–31; it reads FVCNAPGCGQRFTNEDHLAVHKHKH. Threonine 51 carries the phosphothreonine; by MAPK11 modification. Phosphothreonine occurs at positions 53 and 101. Residue lysine 107 forms a Glycyl lysine isopeptide (Lys-Gly) (interchain with G-Cter in SUMO1) linkage. Disordered stretches follow at residues 110-148 and 299-345; these read EPVE…TPTP and HPDA…NRAA. 2 stretches are compositionally biased toward low complexity: residues 114–126 and 307–320; these read VDSS…ASSP and QPQV…PSTG. The segment covering 326 to 343 has biased composition (basic and acidic residues); sequence TVDEDPDERRQRFLERNR. The 64-residue stretch at 332–395 folds into the bZIP domain; it reads DERRQRFLER…AQLKQLLLAH (64 aa). A basic motif region spans residues 334-354; sequence RRQRFLERNRAAASRCRQKRK. The tract at residues 360–388 is leucine-zipper; the sequence is LEKKAEELTSQNIQLSNEVTLLRNEVAQL. Disordered regions lie at residues 407–440 and 464–483; these read TQGY…SNGL and LSMP…SAGR. Phosphoserine occurs at positions 413 and 423. The span at 429–440 shows a compositional bias: polar residues; the sequence is QHSSATAPSNGL.

Belongs to the bZIP family. As to quaternary structure, homodimer; binds DNA as homodimer. Heterodimer; heterodimerizes with other members of ATF family and with JUN family members. Interacts with JNK2; the interaction does not phosphorylate ATF7 but acts as a docking site for other ATF-associated partners such as JUN family members. Interacts (via its transactivation domain) with TAF12 (isoforms TAFII15 and TAFII20); the interaction potentiates the transactivation activity (isoform TAFII20 only) and is inhibited by ATF7 sumoylation. Interacts with TAF4; the interaction inhibits the TAF12-dependent transactivation. Interacts with MAPK9; the interaction does not phosphorylate ATF7 but acts as a docking site for ATF7-associated partners such as JUN. Interacts with Ku complex components XRCC6 and XRCC7. Interacts with TERT. In terms of processing, on EGF stimulation, phosphorylated first on Thr-53 allowing subsequent phosphorylation on Thr-51. This latter phosphorylation prevents sumoylation, increases binding to TAF12 and enhances transcriptional activity. Social isolation stress as well as TNF-alpha also induce the phosphorylation of ATF7. Phosphorylated in proliferating colonic and small intestinal epithelial cells. Sumoylation delays nuclear localization and inhibits transactivation activity through preventing binding to TAF12. RANBP2 appears to be the specific E3 ligase.

It is found in the nucleus. It localises to the nucleoplasm. The protein localises to the chromosome. Its subcellular location is the telomere. In terms of biological role, stress-responsive chromatin regulator that plays a role in various biological processes including innate immunological memory, adipocyte differentiation or telomerase regulation. In absence of stress, contributes to the formation of heterochromatin and heterochromatin-like structure by recruiting histone H3K9 tri- and di-methyltransferases thus silencing the transcription of target genes such as STAT1 in adipocytes, or genes involved in innate immunity in macrophages and adipocytes. Stress induces ATF7 phosphorylation that disrupts interactions with histone methyltransferase and enhances the association with coactivators containing histone acetyltransferase and/or histone demethylase, leading to disruption of the heterochromatin-like structure and subsequently transcriptional activation. In response to TNF-alpha, which is induced by various stresses, phosphorylated ATF7 and telomerase are released from telomeres leading to telomere shortening. Plays also a role in maintaining epithelial regenerative capacity and protecting against cell death during intestinal epithelial damage and repair. In Pongo abelii (Sumatran orangutan), this protein is Cyclic AMP-dependent transcription factor ATF-7 (ATF7).